Consider the following 356-residue polypeptide: Protein-glutamate methylesterase/protein-glutamine glutaminase 4 (356 aa).

Residues 15 to 132 (RVLVVDDSAV…SVGEMTADLV (118 aa)) enclose the Response regulatory domain. At D66 the chain carries 4-aspartylphosphate. The CheB-type methylesterase domain occupies 162-348 (ARTTLQVVAI…PLDRIAPEIL (187 aa)). Residues S174, H200, and D296 contribute to the active site.

The protein belongs to the CheB family. Phosphorylated by CheA. Phosphorylation of the N-terminal regulatory domain activates the methylesterase activity.

The protein localises to the cytoplasm. It catalyses the reaction [protein]-L-glutamate 5-O-methyl ester + H2O = L-glutamyl-[protein] + methanol + H(+). It carries out the reaction L-glutaminyl-[protein] + H2O = L-glutamyl-[protein] + NH4(+). Functionally, involved in chemotaxis. Part of a chemotaxis signal transduction system that modulates chemotaxis in response to various stimuli. Catalyzes the demethylation of specific methylglutamate residues introduced into the chemoreceptors (methyl-accepting chemotaxis proteins or MCP) by CheR. Also mediates the irreversible deamidation of specific glutamine residues to glutamic acid. The sequence is that of Protein-glutamate methylesterase/protein-glutamine glutaminase 4 from Anaeromyxobacter dehalogenans (strain 2CP-C).